A 300-amino-acid polypeptide reads, in one-letter code: Iron/alpha-ketoglutarate-dependent dioxygenase okaE (300 aa).

Residues His-134, Asp-136, and His-210 each contribute to the Fe cation site.

Belongs to the PhyH family. Homodimer. Fe cation serves as cofactor.

The enzyme catalyses okaramine A + 2-oxoglutarate + AH2 + O2 = 12-deshydroxyl okaramine E + succinate + A + CO2 + H2O. It carries out the reaction 12-deshydroxyl okaramine E + 2-oxoglutarate + O2 = okaramine E + succinate + CO2. It catalyses the reaction okaramine A + 2-oxoglutarate + O2 = okaramine E + succinate + CO2. It functions in the pathway alkaloid biosynthesis. It participates in secondary metabolite biosynthesis; terpenoid biosynthesis. Its function is as follows. Iron/alpha-ketoglutarate-dependent dioxygenase; part of the gene cluster that mediates the biosynthesis of okaramine B, a prenylated indole alkaloid that possesses an unusual octacyclic ring system, including a four-membered azetidine ring and an eight-membered azocine ring, and that exhibits insecticidal activity against silkworm larvae. Within the pathway, okaE forms the unusual 2-dimethyl-3-methyl-azetidine ring to yield 12-deshydroxyl okaramine E from okaramine A. OkaE also catalyzes the hydroxylation of 12-deshydroxyl okaramine E to produce okaramine E. The biosynthesis begins with the NRPS okaA that condenses two tryptophan molecules into cyclo(L-Trp-L-Trp). Prenylation by the prenyltransferase okaC then leads to the formation of cyclo(N8-(alpha,alpha-dimethylallyl)-L-Trp-6a-(alpha,alpha-dime-thylallyl)-L-Trp). This is followed by indole 2,3-epoxidation by the FAD-dependent monooxygenase okaB to facilitate the formation of the hexahydropyrrolo[2,3-b]indole (HPI) moiety of okaramine C. The cytochrome P450 monooxygenase okaD then likely catalyzes formation of the eight-membered ring of okaramine A. The dioxygenase okaE further forms the unusual 2-dimethyl-3-methyl-azetidine ring to yield 12-deshydroxyl okaramine E, as well as the hydroxylation of 12-deshydroxyl okaramine E to produce okaramine E. The cytochrome P450 monoxygenase okaG converts 12-deshydroxyl okaramine E into 3-desmethyl okaramine B which is further methylated by the methyltransferase okaF into okaramine B. In a shunt pathway, okaG and okaF together are also able to convert okaramine E into okaramine D. Okaramine H is produced by nonenzymatic conversion from okaramine A. The chain is Iron/alpha-ketoglutarate-dependent dioxygenase okaE from Penicillium ochrochloron.